The chain runs to 185 residues: HTH-type transcriptional repressor OpcR (185 aa).

Positions 49 to 73 (LSELSEATGMSKTRMSQVVREMIDA) form a DNA-binding region, H-T-H motif.

Belongs to the GbsR family.

Its activity is regulated as follows. Is not choline-responsive. Negatively regulates the transcription of the opuC operon. In the absence of GbsR, is also a negative regulator of the opuB operon. Binds to an inverted repeat in the promoter region of the operons. The polypeptide is HTH-type transcriptional repressor OpcR (opcR) (Bacillus subtilis (strain 168)).